The sequence spans 352 residues: Photosystem II D2 protein (352 aa).

Residues 1–31 lie on the Cytoplasmic side of the membrane; that stretch reads MTIAIGRAPAERGWFDILDDWLKRDRFVFVG. A helical transmembrane segment spans residues 32-53; it reads WSGILLFPCAYLALGGWLTGTT. Topologically, residues 54–108 are lumenal; that stretch reads FVTSWYTHGLASSYLEGCNFLTVAVSTPANSMGHSLLLLWGPEAQGDFTRWCQLG. The chain crosses the membrane as a helical span at residues 109–131; it reads GLWTFIALHGAFGLIGFMLRQFE. His117 lines the chlorophyll a pocket. Gln129 serves as a coordination point for pheophytin a. The Cytoplasmic portion of the chain corresponds to 132-140; that stretch reads IARLVGVRP. Residues 141–160 form a helical membrane-spanning segment; the sequence is YNAIAFSAPIAVFVSVFLIY. Position 142 (Asn142) interacts with pheophytin a. The Lumenal segment spans residues 161–193; that stretch reads PLGQSSWFFAPSFGVAAIFRFLLFFQGFHNWTL. A helical transmembrane segment spans residues 194–217; that stretch reads NPFHMMGVAGVLGGALLCAIHGAT. His197 is a binding site for chlorophyll a. The a plastoquinone site is built by His214 and Phe261. Fe cation is bound at residue His214. Residues 218 to 265 lie on the Cytoplasmic side of the membrane; it reads VENTLFQDGEGASTFRAFNPTQAEETYSMVTANRFWSQIFGIAFSNKR. Residues 266–288 traverse the membrane as a helical segment; it reads WLHFFMLFVPVTGLWMSAIGVVG. His268 is a binding site for Fe cation. The Lumenal segment spans residues 289–352; sequence LALNLRSYDF…EEVLPRGNAL (64 aa).

Belongs to the reaction center PufL/M/PsbA/D family. In terms of assembly, PSII is composed of 1 copy each of membrane proteins PsbA, PsbB, PsbC, PsbD, PsbE, PsbF, PsbH, PsbI, PsbJ, PsbK, PsbL, PsbM, PsbT, PsbX, PsbY, PsbZ, Psb30/Ycf12, peripheral proteins PsbO, CyanoQ (PsbQ), PsbU, PsbV and a large number of cofactors. It forms dimeric complexes. Part of a photosystem II (PSII) assembly intermediate complex PSII-I; crystallized from a strain deleted of psbJ, it forms monomeric PSII before addition of the oxygen evolving complex. PSII-I includes 3 assembly factors not found in mature PSII (Psb27, Psb28 and Psb34). The D1/D2 heterodimer binds P680, chlorophylls that are the primary electron donor of PSII, and subsequent electron acceptors. It shares a non-heme iron and each subunit binds pheophytin, quinone, additional chlorophylls, carotenoids and lipids. There is also a Cl(-1) ion associated with D1 and D2, which is required for oxygen evolution. PSII binds additional chlorophylls, carotenoids and specific lipids. is required as a cofactor.

It localises to the cellular thylakoid membrane. The catalysed reaction is 2 a plastoquinone + 4 hnu + 2 H2O = 2 a plastoquinol + O2. Functionally, photosystem II (PSII) is a light-driven water:plastoquinone oxidoreductase that uses light energy to abstract electrons from H(2)O, generating O(2) and a proton gradient subsequently used for ATP formation. It consists of a core antenna complex that captures photons, and an electron transfer chain that converts photonic excitation into a charge separation. The D1/D2 (PsbA/PsbD) reaction center heterodimer binds P680, the primary electron donor of PSII as well as several subsequent electron acceptors. D2 is needed for assembly of a stable PSII complex. The sequence is that of Photosystem II D2 protein from Thermosynechococcus vestitus (strain NIES-2133 / IAM M-273 / BP-1).